Reading from the N-terminus, the 89-residue chain is Small ribosomal subunit protein bS18 (89 aa).

The protein belongs to the bacterial ribosomal protein bS18 family. In terms of assembly, part of the 30S ribosomal subunit. Forms a tight heterodimer with protein bS6.

In terms of biological role, binds as a heterodimer with protein bS6 to the central domain of the 16S rRNA, where it helps stabilize the platform of the 30S subunit. The protein is Small ribosomal subunit protein bS18 of Phocaeicola vulgatus (strain ATCC 8482 / DSM 1447 / JCM 5826 / CCUG 4940 / NBRC 14291 / NCTC 11154) (Bacteroides vulgatus).